The sequence spans 285 residues: tRNA-cytidine(32) 2-sulfurtransferase (285 aa).

Residues 48 to 53 carry the PP-loop motif motif; it reads SGGKDS. Cys122, Cys125, and Cys213 together coordinate [4Fe-4S] cluster.

It belongs to the TtcA family. In terms of assembly, homodimer. Mg(2+) serves as cofactor. [4Fe-4S] cluster is required as a cofactor.

The protein resides in the cytoplasm. The enzyme catalyses cytidine(32) in tRNA + S-sulfanyl-L-cysteinyl-[cysteine desulfurase] + AH2 + ATP = 2-thiocytidine(32) in tRNA + L-cysteinyl-[cysteine desulfurase] + A + AMP + diphosphate + H(+). Its pathway is tRNA modification. Its function is as follows. Catalyzes the ATP-dependent 2-thiolation of cytidine in position 32 of tRNA, to form 2-thiocytidine (s(2)C32). The sulfur atoms are provided by the cysteine/cysteine desulfurase (IscS) system. In Cytophaga hutchinsonii (strain ATCC 33406 / DSM 1761 / CIP 103989 / NBRC 15051 / NCIMB 9469 / D465), this protein is tRNA-cytidine(32) 2-sulfurtransferase.